The sequence spans 188 residues: dTTP/UTP pyrophosphatase (188 aa).

Aspartate 67 (proton acceptor) is an active-site residue.

Belongs to the Maf family. YhdE subfamily. It depends on a divalent metal cation as a cofactor.

Its subcellular location is the cytoplasm. The catalysed reaction is dTTP + H2O = dTMP + diphosphate + H(+). The enzyme catalyses UTP + H2O = UMP + diphosphate + H(+). Its function is as follows. Nucleoside triphosphate pyrophosphatase that hydrolyzes dTTP and UTP. May have a dual role in cell division arrest and in preventing the incorporation of modified nucleotides into cellular nucleic acids. In Thermococcus kodakarensis (strain ATCC BAA-918 / JCM 12380 / KOD1) (Pyrococcus kodakaraensis (strain KOD1)), this protein is dTTP/UTP pyrophosphatase.